A 345-amino-acid chain; its full sequence is tRNA-specific 2-thiouridylase MnmA (345 aa).

Residues leucine 6–serine 13 and leucine 32 each bind ATP. Residue cysteine 92 is the Nucleophile of the active site. Cysteine 92 and cysteine 191 are oxidised to a cystine. Glycine 116 lines the ATP pocket. Residues lysine 138–glutamine 140 are interaction with tRNA. The active-site Cysteine persulfide intermediate is cysteine 191. Residues arginine 293–tyrosine 294 are interaction with tRNA.

The protein belongs to the MnmA/TRMU family.

It is found in the cytoplasm. It carries out the reaction S-sulfanyl-L-cysteinyl-[protein] + uridine(34) in tRNA + AH2 + ATP = 2-thiouridine(34) in tRNA + L-cysteinyl-[protein] + A + AMP + diphosphate + H(+). Catalyzes the 2-thiolation of uridine at the wobble position (U34) of tRNA, leading to the formation of s(2)U34. This is tRNA-specific 2-thiouridylase MnmA from Helicobacter hepaticus (strain ATCC 51449 / 3B1).